Reading from the N-terminus, the 175-residue chain is RNA pyrophosphohydrolase (175 aa).

The region spanning 7–150 (GYRLNVGIIL…KRQVYIQALK (144 aa)) is the Nudix hydrolase domain. Residues 39–60 (GGLAPGETAMQAMYRELHEEVG) carry the Nudix box motif.

Belongs to the Nudix hydrolase family. RppH subfamily. A divalent metal cation is required as a cofactor.

Accelerates the degradation of transcripts by removing pyrophosphate from the 5'-end of triphosphorylated RNA, leading to a more labile monophosphorylated state that can stimulate subsequent ribonuclease cleavage. The polypeptide is RNA pyrophosphohydrolase (Legionella pneumophila (strain Paris)).